The following is a 30-amino-acid chain: L-serine dehydratase, alpha chain (30 aa).

It belongs to the iron-sulfur dependent L-serine dehydratase family. As to quaternary structure, heterodimer of an alpha chain and a beta chain. [4Fe-4S] cluster serves as cofactor.

It carries out the reaction L-serine = pyruvate + NH4(+). It functions in the pathway carbohydrate biosynthesis; gluconeogenesis. This is L-serine dehydratase, alpha chain from Anaerotignum propionicum (Clostridium propionicum).